We begin with the raw amino-acid sequence, 463 residues long: Digalactosyldiacylglycerol synthase 2, chloroplastic (463 aa).

Positions 1–22 (MGKKQHIAIFTTASLPWLTGTA) are cleaved as a signal peptide.

It belongs to the glycosyltransferase group 1 family. Glycosyltransferase 4 subfamily. In terms of tissue distribution, high expression in nodules infected cells, and low in nodule and root vascular tissue.

It is found in the plastid. Its subcellular location is the chloroplast outer membrane. The protein localises to the plastid outer membrane. The enzyme catalyses a 1,2-diacyl-3-O-(beta-D-galactosyl)-sn-glycerol + UDP-alpha-D-galactose = a 1,2-diacyl-3-O-[alpha-D-galactosyl-(1-&gt;6)-beta-D-galactosyl]-sn-glycerol + UDP + H(+). In terms of biological role, involved in the synthesis of diacylglycerol galactolipids that are specifically found in thylakoid and in nodule peribacteroid membranes. Specific for alpha-glycosidic linkages. This Lotus japonicus (Lotus corniculatus var. japonicus) protein is Digalactosyldiacylglycerol synthase 2, chloroplastic.